The primary structure comprises 370 residues: Uroporphyrinogen decarboxylase (370 aa).

Residues 29-33 (RQAGR), Asp79, Tyr155, Ser210, and His342 contribute to the substrate site.

The protein belongs to the uroporphyrinogen decarboxylase family. As to quaternary structure, homodimer.

It localises to the cytoplasm. It carries out the reaction uroporphyrinogen III + 4 H(+) = coproporphyrinogen III + 4 CO2. It functions in the pathway porphyrin-containing compound metabolism; protoporphyrin-IX biosynthesis; coproporphyrinogen-III from 5-aminolevulinate: step 4/4. Its function is as follows. Catalyzes the decarboxylation of four acetate groups of uroporphyrinogen-III to yield coproporphyrinogen-III. The polypeptide is Uroporphyrinogen decarboxylase (Variovorax paradoxus (strain S110)).